The chain runs to 149 residues: Transcriptional repressor NrdR (149 aa).

Residues 3-34 (CPFCFAVDTKVIDSRLVGEGSSVRRRRQCLVC) fold into a zinc finger. The ATP-cone domain maps to 49–139 (PRVVKSNDVR…VYRSFEDIKE (91 aa)).

Belongs to the NrdR family. Zn(2+) is required as a cofactor.

Negatively regulates transcription of bacterial ribonucleotide reductase nrd genes and operons by binding to NrdR-boxes. The sequence is that of Transcriptional repressor NrdR from Shigella flexneri.